A 745-amino-acid polypeptide reads, in one-letter code: 5-methyltetrahydropteroyltriglutamate--homocysteine methyltransferase (745 aa).

5-methyltetrahydropteroyltri-L-glutamate is bound by residues 16–19 and Lys-110; that span reads REWK. L-homocysteine-binding positions include 420–422 and Glu-473; that span reads IGS. L-methionine is bound by residues 420-422 and Glu-473; that span reads IGS. Trp-550 is a binding site for 5-methyltetrahydropteroyltri-L-glutamate. Asp-588 is an L-homocysteine binding site. Residue Asp-588 participates in L-methionine binding. Glu-594 lines the 5-methyltetrahydropteroyltri-L-glutamate pocket. Zn(2+) is bound by residues His-630, Cys-632, and Glu-654. His-683 acts as the Proton donor in catalysis. Residue Cys-715 coordinates Zn(2+).

The protein belongs to the vitamin-B12 independent methionine synthase family. Zn(2+) is required as a cofactor.

The catalysed reaction is 5-methyltetrahydropteroyltri-L-glutamate + L-homocysteine = tetrahydropteroyltri-L-glutamate + L-methionine. It participates in amino-acid biosynthesis; L-methionine biosynthesis via de novo pathway; L-methionine from L-homocysteine (MetE route): step 1/1. In terms of biological role, catalyzes the transfer of a methyl group from 5-methyltetrahydrofolate to homocysteine resulting in methionine formation. This chain is 5-methyltetrahydropteroyltriglutamate--homocysteine methyltransferase, found in Streptococcus agalactiae serotype III (strain NEM316).